The primary structure comprises 376 residues: Queuine tRNA-ribosyltransferase (376 aa).

D89 (proton acceptor) is an active-site residue. Residues 89–93 (DSGGF), D143, Q194, and G221 contribute to the substrate site. The RNA binding stretch occupies residues 252-258 (GVGLPSN). Residue D271 is the Nucleophile of the active site. Residues 276–280 (ARNGR) form an RNA binding; important for wobble base 34 recognition region. 4 residues coordinate Zn(2+): C309, C311, C314, and H340.

The protein belongs to the queuine tRNA-ribosyltransferase family. Homodimer. Within each dimer, one monomer is responsible for RNA recognition and catalysis, while the other monomer binds to the replacement base PreQ1. Requires Zn(2+) as cofactor.

It carries out the reaction 7-aminomethyl-7-carbaguanine + guanosine(34) in tRNA = 7-aminomethyl-7-carbaguanosine(34) in tRNA + guanine. The protein operates within tRNA modification; tRNA-queuosine biosynthesis. Functionally, catalyzes the base-exchange of a guanine (G) residue with the queuine precursor 7-aminomethyl-7-deazaguanine (PreQ1) at position 34 (anticodon wobble position) in tRNAs with GU(N) anticodons (tRNA-Asp, -Asn, -His and -Tyr). Catalysis occurs through a double-displacement mechanism. The nucleophile active site attacks the C1' of nucleotide 34 to detach the guanine base from the RNA, forming a covalent enzyme-RNA intermediate. The proton acceptor active site deprotonates the incoming PreQ1, allowing a nucleophilic attack on the C1' of the ribose to form the product. After dissociation, two additional enzymatic reactions on the tRNA convert PreQ1 to queuine (Q), resulting in the hypermodified nucleoside queuosine (7-(((4,5-cis-dihydroxy-2-cyclopenten-1-yl)amino)methyl)-7-deazaguanosine). This chain is Queuine tRNA-ribosyltransferase, found in Clostridium tetani (strain Massachusetts / E88).